The following is a 448-amino-acid chain: Probable sodium-coupled neutral amino acid transporter 6 (448 aa).

Polar residues-rich tracts occupy residues 1–12 and 26–36; these read MQASDSSINTLD and LLANSPQRRSS. The segment at 1–36 is disordered; the sequence is MQASDSSINTLDGHQVSAGRDESTPLLANSPQRRSS. The next 5 helical transmembrane spans lie at 40-60, 69-89, 117-137, 164-184, and 185-205; these read SFGFAVFNLMNAIMGSGILGL, ILGFSALLLIVALLAAYSIHL, LVACTILIQNVGAMSSYLFII, LLIITSVCIVLPLALLPKIGF, and LGYTSSLSFFFMVYFAVVIVI. C212 and C232 form a disulfide bridge. N-linked (GlcNAc...) asparagine glycans are attached at residues N218 and N228. Transmembrane regions (helical) follow at residues 244 to 264, 281 to 301, 321 to 341, 365 to 385, 388 to 408, and 425 to 445; these read AFALPTMAFSFLCHTSVLPIY, VGIALSFLIYYISALFGYLTF, VLIITVRLCILLAVLLTVPLI, ILVTLVLNIIIVLLAIYVPDM, VFGVVGSTTSTCLLFVFPGLF, and ACGLLVLGICIGACSLTLIIM.

This sequence belongs to the amino acid/polyamine transporter 2 family.

It is found in the cell membrane. Probable sodium-dependent amino acid/proton antiporter, could be a neuronal transporter for glutamate. The chain is Probable sodium-coupled neutral amino acid transporter 6 (slc38a6) from Xenopus tropicalis (Western clawed frog).